A 437-amino-acid chain; its full sequence is MDKKFYITTLGCPKNIADSMSMHHSLLEEGFTPASLPEESDFHFINTCTFIQSATEETIQTILSAAQVKKQNHQKLVVVGCFAERYPDNIHSEIPEVDLFFGTGKYSQAGKILREKFPELSPSQLEFNDSLLERWKLSSKIENYSKPYAYVKVSDGCNRGCSFCIIPSFRGKFAESPLDDILRDTNRAIRAGAKEICLVSQDTVYYGRDSEILLDMVRKVAEIDSLEILRLLYLYPDKKTEKLIRLMGETSKIAPYLESPLQHVSSKILKVMNRTGESSYFKDLFSLAREVKPGLEIRTSFIIGYPGEEPEDVDQILRFIEDTRPEKVNLFSYSPQEGTKGAQLKQTVSEKEKSKRINLIRDSHLEILEEIHESRIGRTYDAIVDGIEDGQAVVRRFQDAPEMDEVVYVDDVSLLPGRIGKVRIDSFYEYDMNGTWV.

The MTTase N-terminal domain maps to K3–P118. 6 residues coordinate [4Fe-4S] cluster: C12, C48, C81, C157, C161, and C164. The 228-residue stretch at N143–E370 folds into the Radical SAM core domain. Residues E373–V437 enclose the TRAM domain.

It belongs to the methylthiotransferase family. RimO subfamily. [4Fe-4S] cluster is required as a cofactor.

It is found in the cytoplasm. It catalyses the reaction L-aspartate(89)-[ribosomal protein uS12]-hydrogen + (sulfur carrier)-SH + AH2 + 2 S-adenosyl-L-methionine = 3-methylsulfanyl-L-aspartate(89)-[ribosomal protein uS12]-hydrogen + (sulfur carrier)-H + 5'-deoxyadenosine + L-methionine + A + S-adenosyl-L-homocysteine + 2 H(+). Catalyzes the methylthiolation of an aspartic acid residue of ribosomal protein uS12. The chain is Ribosomal protein uS12 methylthiotransferase RimO from Leptospira interrogans serogroup Icterohaemorrhagiae serovar copenhageni (strain Fiocruz L1-130).